The chain runs to 145 residues: Putative pre-16S rRNA nuclease (145 aa).

It belongs to the YqgF nuclease family.

The protein localises to the cytoplasm. Its function is as follows. Could be a nuclease involved in processing of the 5'-end of pre-16S rRNA. The chain is Putative pre-16S rRNA nuclease from Pseudomonas fluorescens (strain SBW25).